Here is a 296-residue protein sequence, read N- to C-terminus: 4-hydroxybenzoate octaprenyltransferase (296 aa).

8 helical membrane-spanning segments follow: residues 28-48 (IGTL…SDGI), 51-71 (LAVL…GCVI), 102-122 (LLLT…LNHL), 143-163 (FFPI…PMAF), 174-194 (AWIL…VYAM), 212-232 (FGRY…LLMA), 233-253 (VLGA…IVLL), and 274-294 (FLAN…HTFF).

It belongs to the UbiA prenyltransferase family. Mg(2+) is required as a cofactor.

The protein resides in the cell inner membrane. The enzyme catalyses all-trans-octaprenyl diphosphate + 4-hydroxybenzoate = 4-hydroxy-3-(all-trans-octaprenyl)benzoate + diphosphate. Its pathway is cofactor biosynthesis; ubiquinone biosynthesis. Its function is as follows. Catalyzes the prenylation of para-hydroxybenzoate (PHB) with an all-trans polyprenyl group. Mediates the second step in the final reaction sequence of ubiquinone-8 (UQ-8) biosynthesis, which is the condensation of the polyisoprenoid side chain with PHB, generating the first membrane-bound Q intermediate 3-octaprenyl-4-hydroxybenzoate. The chain is 4-hydroxybenzoate octaprenyltransferase from Neisseria gonorrhoeae (strain NCCP11945).